The chain runs to 657 residues: Zinc transporter ZIP4 (657 aa).

The signal sequence occupies residues 1 to 22 (MMLPKSLTQGLLLAMLVGTAAM). Over 23–335 (VQPYHLLSLL…QDQLSQAERY (313 aa)) the chain is Extracellular. N-linked (GlcNAc...) asparagine glycosylation is found at asparagine 193, asparagine 220, and asparagine 268. A helical transmembrane segment spans residues 336–356 (LYGSLATLLICLCAVFGLLLL). Topologically, residues 357-374 (TCAKCSTATHYIMQTFLS) are cytoplasmic. A helical transmembrane segment spans residues 375 to 395 (LAVGALTGDALLHLIPKVLGL). Topologically, residues 396 to 417 (HTHSGEVHSHEEESIGGQSTWR) are extracellular. Residues 418–438 (LLAVLGGFYIFFLFESFFNLL) form a helical membrane-spanning segment. Residues 439–508 (LPRDQDHEKD…LRAELRMLPY (70 aa)) lie on the Cytoplasmic side of the membrane. Positions 462 to 464 (LQL) match the Essential for SLC39A4 endocytosis motif. The interval 467-491 (SNLRQSKQPHESSRSDLVTEETPEL) is disordered. A helical membrane pass occupies residues 509–528 (LITLGDAVHNFADGLAVGAA). Zn(2+) is bound by residues histidine 517, asparagine 518, and aspartate 521. Residues 529-536 (FSSTWKTG) lie on the Extracellular side of the membrane. The helical transmembrane segment at 537–563 (LATSLAVFCHELPHELGDFAALLHAGL) threads the bilayer. Positions 546, 547, and 550 each coordinate Zn(2+). Topologically, residues 564–568 (TVKRA) are cytoplasmic. A helical membrane pass occupies residues 569–589 (LLLNLASALTAFAGLYVALAV). The Extracellular portion of the chain corresponds to 590 to 597 (GVGEEGET). The chain crosses the membrane as a helical span at residues 598–618 (WILAVATGLFLYVALCDMLPA). Topologically, residues 619-627 (MMNVRDQRP) are cytoplasmic. Residues 628–648 (WLLFLLHNVGLLGGWTILLLL) traverse the membrane as a helical segment. The Extracellular portion of the chain corresponds to 649–657 (SLYEDSITF).

The protein belongs to the ZIP transporter (TC 2.A.5) family. In terms of assembly, homodimer; homodimerization is mediated by the transmembrane domain. Post-translationally, the extracellular N-terminal ectodomain is cleaved when cells are Zn(2+) deficient, N-terminally cleaved SLC39A4 is internalized at a faster rate. In terms of processing, under excess Zn(2+) conditions, SLC39A4 on the cell surface is rapidly endocytosed, ubiquitinated and degraded. Glycosylated. Expressed in duodenum, jejunum, and ileum.

It localises to the cell membrane. It is found in the recycling endosome membrane. The protein resides in the apical cell membrane. It carries out the reaction Zn(2+)(in) = Zn(2+)(out). Its function is as follows. Selective transporter that mediates the uptake of Zn(2+). Plays an essential role for dietary zinc uptake from small intestine. The Zn(2+) uniporter activity is regulated by zinc availability. Also exhibits polyspecific binding and transport of Cu(2+), Cd(2+) and possibly Ni(2+) but at higher concentrations. This Rattus norvegicus (Rat) protein is Zinc transporter ZIP4 (Slc39a4).